The chain runs to 289 residues: Aquaporin PIP1-1 (289 aa).

Residues 1–36 (MEGKEEDVRLGANRYSERQPIGTAAQGAGDDKDYKE) are disordered. 2 helical membrane passes run 58–78 (IAEFVATFLFLYITILTVMGV) and 93–115 (IAWSFGGMIFALVYCTAGISGGH). The NPA 1 motif lies at 117–119 (NPA). Helical transmembrane passes span 136–156 (IFYIVMQCLGAICGAGVVKGF), 178–198 (GDGLGAEIVGTFILVYTVFSA), and 212–232 (ILAPLPIGFAVFLVHLATIPI). The NPA 2 motif lies at 238-240 (NPA). Residues 260–280 (IFWVGPFVGAALAAIYHQVII) traverse the membrane as a helical segment.

This sequence belongs to the MIP/aquaporin (TC 1.A.8) family. PIP (TC 1.A.8.11) subfamily. Expressed in roots, leaves and anthers.

Its subcellular location is the cell membrane. Its function is as follows. May function as water channel to facilitate the transport of water across cell membrane. This chain is Aquaporin PIP1-1 (PIP1-1), found in Oryza sativa subsp. japonica (Rice).